Reading from the N-terminus, the 207-residue chain is Outer-membrane lipoprotein LolB (207 aa).

A signal peptide spans 1–26; that stretch reads MSKLKIDTKRRFSLLIALVLIISLSS. Cys27 carries the N-palmitoyl cysteine lipid modification. A lipid anchor (S-diacylglycerol cysteine) is attached at Cys27.

Belongs to the LolB family. Monomer.

It is found in the cell outer membrane. Plays a critical role in the incorporation of lipoproteins in the outer membrane after they are released by the LolA protein. The chain is Outer-membrane lipoprotein LolB from Francisella tularensis subsp. tularensis (strain WY96-3418).